We begin with the raw amino-acid sequence, 94 residues long: Small ribosomal subunit protein uS19 (94 aa).

This sequence belongs to the universal ribosomal protein uS19 family.

Its function is as follows. Protein S19 forms a complex with S13 that binds strongly to the 16S ribosomal RNA. The protein is Small ribosomal subunit protein uS19 of Halothermothrix orenii (strain H 168 / OCM 544 / DSM 9562).